We begin with the raw amino-acid sequence, 493 residues long: Glutamyl-tRNA(Gln) amidotransferase subunit A (493 aa).

Catalysis depends on charge relay system residues lysine 81 and serine 156. Serine 180 serves as the catalytic Acyl-ester intermediate.

This sequence belongs to the amidase family. GatA subfamily. As to quaternary structure, heterotrimer of A, B and C subunits.

It carries out the reaction L-glutamyl-tRNA(Gln) + L-glutamine + ATP + H2O = L-glutaminyl-tRNA(Gln) + L-glutamate + ADP + phosphate + H(+). In terms of biological role, allows the formation of correctly charged Gln-tRNA(Gln) through the transamidation of misacylated Glu-tRNA(Gln) in organisms which lack glutaminyl-tRNA synthetase. The reaction takes place in the presence of glutamine and ATP through an activated gamma-phospho-Glu-tRNA(Gln). This chain is Glutamyl-tRNA(Gln) amidotransferase subunit A, found in Mycobacterium ulcerans (strain Agy99).